A 24-amino-acid polypeptide reads, in one-letter code: Heat shock 70 kDa protein 4L (24 aa).

The residue at position 19 (Thr-19) is a Phosphothreonine.

This sequence belongs to the heat shock protein 70 family. In terms of assembly, homodimer. In the testis, forms a complex with p53 at 32.5 degrees Celsius which is scrotal temperature but not at 37 or 42 degrees Celsius. Expressed at high levels in testis and at much lower levels in brain. In testis, expressed mainly in germ cells. Widespread in brain with highest expression in cerebellum and medulla oblongata. Also expressed in renal medulla of water-restricted animals.

It localises to the cytoplasm. It is found in the nucleus. Possesses chaperone activity in vitro where it inhibits aggregation of citrate synthase. This chain is Heat shock 70 kDa protein 4L (Hspa4l), found in Rattus norvegicus (Rat).